The chain runs to 284 residues: Hypoxanthine-guanine phosphoribosyltransferase (284 aa).

GMP contacts are provided by residues lysine 129, 194–202 (EDIIDTGKT), lysine 226, and aspartate 253. Aspartate 198 (proton acceptor) is an active-site residue. Aspartate 253 contacts Mg(2+).

The protein belongs to the purine/pyrimidine phosphoribosyltransferase family. In terms of assembly, homotetramer. Mg(2+) is required as a cofactor.

Its subcellular location is the cytoplasm. The catalysed reaction is IMP + diphosphate = hypoxanthine + 5-phospho-alpha-D-ribose 1-diphosphate. It carries out the reaction GMP + diphosphate = guanine + 5-phospho-alpha-D-ribose 1-diphosphate. The protein operates within purine metabolism; IMP biosynthesis via salvage pathway; IMP from hypoxanthine: step 1/1. Functionally, converts guanine to guanosine monophosphate, and hypoxanthine to inosine monophosphate. Transfers the 5-phosphoribosyl group from 5-phosphoribosylpyrophosphate onto the purine. Plays a central role in the generation of purine nucleotides through the purine salvage pathway. The polypeptide is Hypoxanthine-guanine phosphoribosyltransferase (HGPRT) (Schistosoma mansoni (Blood fluke)).